A 310-amino-acid chain; its full sequence is tRNA dimethylallyltransferase (310 aa).

5 to 12 (GPTASGKS) provides a ligand contact to ATP. 7-12 (TASGKS) contacts substrate. Positions 30–33 (DSMQ) are interaction with substrate tRNA.

The protein belongs to the IPP transferase family. As to quaternary structure, monomer. The cofactor is Mg(2+).

The catalysed reaction is adenosine(37) in tRNA + dimethylallyl diphosphate = N(6)-dimethylallyladenosine(37) in tRNA + diphosphate. Its function is as follows. Catalyzes the transfer of a dimethylallyl group onto the adenine at position 37 in tRNAs that read codons beginning with uridine, leading to the formation of N6-(dimethylallyl)adenosine (i(6)A). The sequence is that of tRNA dimethylallyltransferase from Rhodopseudomonas palustris (strain HaA2).